Consider the following 418-residue polypeptide: Trimethyllysine dioxygenase, mitochondrial (418 aa).

Residues histidine 239, aspartate 241, and histidine 386 each coordinate Fe cation.

Belongs to the gamma-BBH/TMLD family. As to quaternary structure, homodimer. Fe(2+) is required as a cofactor. It depends on L-ascorbate as a cofactor.

The protein resides in the mitochondrion matrix. The catalysed reaction is N(6),N(6),N(6)-trimethyl-L-lysine + 2-oxoglutarate + O2 = (3S)-3-hydroxy-N(6),N(6),N(6)-trimethyl-L-lysine + succinate + CO2. It functions in the pathway amine and polyamine biosynthesis; carnitine biosynthesis. Its function is as follows. Converts trimethyllysine (TML) into hydroxytrimethyllysine (HTML). This Gallus gallus (Chicken) protein is Trimethyllysine dioxygenase, mitochondrial (TMLHE).